The chain runs to 493 residues: UDP-N-acetylmuramoylalanine--D-glutamate ligase (493 aa).

126-132 (GTNGKTT) serves as a coordination point for ATP.

The protein belongs to the MurCDEF family.

It localises to the cytoplasm. The catalysed reaction is UDP-N-acetyl-alpha-D-muramoyl-L-alanine + D-glutamate + ATP = UDP-N-acetyl-alpha-D-muramoyl-L-alanyl-D-glutamate + ADP + phosphate + H(+). It participates in cell wall biogenesis; peptidoglycan biosynthesis. Cell wall formation. Catalyzes the addition of glutamate to the nucleotide precursor UDP-N-acetylmuramoyl-L-alanine (UMA). This chain is UDP-N-acetylmuramoylalanine--D-glutamate ligase, found in Mycolicibacterium smegmatis (strain ATCC 700084 / mc(2)155) (Mycobacterium smegmatis).